A 211-amino-acid polypeptide reads, in one-letter code: Large ribosomal subunit protein uL4 (211 aa).

A disordered region spans residues 63-94; sequence RFGRQKGGGTARHGARSAPQFVGGGKAHGPRV.

This sequence belongs to the universal ribosomal protein uL4 family. Part of the 50S ribosomal subunit.

Its function is as follows. One of the primary rRNA binding proteins, this protein initially binds near the 5'-end of the 23S rRNA. It is important during the early stages of 50S assembly. It makes multiple contacts with different domains of the 23S rRNA in the assembled 50S subunit and ribosome. Functionally, forms part of the polypeptide exit tunnel. This Maricaulis maris (strain MCS10) (Caulobacter maris) protein is Large ribosomal subunit protein uL4.